We begin with the raw amino-acid sequence, 96 residues long: Bacterial microcompartment shell protein EutM (96 aa).

A BMC domain is found at 3 to 87; the sequence is ALGMIETRGL…PHGDLEEVFP (85 aa).

This sequence belongs to the bacterial microcompartments protein family. In terms of assembly, homohexamer with a central pore of up to 8.6 Angstroms diameter. The hexamers pack into a two-dimensional array. Interacts with EutQ; a probably cytoplasm-facing helix (Val-49 to Gln-64) interacts with N-terminus of EutQ.

The protein resides in the bacterial microcompartment. Its pathway is amine and polyamine degradation; ethanolamine degradation. Probably a major component of the bacterial microcompartment (BMC) shell dedicated to ethanolamine degradation. Each homohexamer has a central pore with an opening of up to 8.6 Angstroms. A positively-charged funnel leads to the pore from each side of the hexamer. The pore probably allows metabolite passage into and out of the BMC. Expression of eutK, eutL, eutM, eutN, eutS (eutSMNLK) in E.coli leads to formation of a single BMC. Expression alone leads to thick filaments that interfere with cell separation. Coexpression of eutQ with eutSMNLK permits E.coli to make cells with more than one mobile BMC, as is usual in vivo. May play a role in BMC shell biogenesis. Can replace homolog pduA in the pdu operon, cells grow better than wild-type on 1,2-propanediol and vitamin B12. Protein is incorporated into the pdu BMC microcompartment. Functionally, the ethanolamine (EA) catabolic bacterial microcompartment (BMC) probably concentrates low levels of ethanolamine catabolic enzymes, concentrates volatile reaction intermediates, keeps the level of toxic acetaldehyde low, generates enough acetyl-CoA to support cell growth, and maintains a pool of free coenzyme A (CoA) and NAD. Deletion of BMC genes (eutK, eutL, eutM) restores growth of eutD deletions, suggesting there are dedicated pools of coenzyme A (CoA) and NAD in the BMC. In terms of biological role, expression of the eut operon allows this bacteria to use ethanolamine as a carbon, nitrogen and energy source. It relies on cobalamin (vitamin B12) both as a cofactor for the ethanolamine ammonia-lyase (EAL) activity and to induce the operon. EA enhances bacterial survival in macrophages in a concentration-dependent manner, suggesting it is an important nutrient during infection. The sequence is that of Bacterial microcompartment shell protein EutM from Salmonella typhimurium (strain LT2 / SGSC1412 / ATCC 700720).